Reading from the N-terminus, the 452-residue chain is Probable phosphoglucosamine mutase (452 aa).

The active-site Phosphoserine intermediate is the serine 96. Mg(2+)-binding residues include serine 96, aspartate 233, aspartate 235, and aspartate 237. Serine 96 carries the post-translational modification Phosphoserine.

It belongs to the phosphohexose mutase family. It depends on Mg(2+) as a cofactor. Post-translationally, activated by phosphorylation.

The catalysed reaction is alpha-D-glucosamine 1-phosphate = D-glucosamine 6-phosphate. Functionally, catalyzes the conversion of glucosamine-6-phosphate to glucosamine-1-phosphate. The protein is Probable phosphoglucosamine mutase of Pyrococcus furiosus (strain ATCC 43587 / DSM 3638 / JCM 8422 / Vc1).